A 158-amino-acid chain; its full sequence is Small ribosomal subunit protein uS7 (158 aa).

It belongs to the universal ribosomal protein uS7 family. As to quaternary structure, part of the 30S ribosomal subunit. Contacts proteins S9 and S11.

Its function is as follows. One of the primary rRNA binding proteins, it binds directly to 16S rRNA where it nucleates assembly of the head domain of the 30S subunit. Is located at the subunit interface close to the decoding center, probably blocks exit of the E-site tRNA. This chain is Small ribosomal subunit protein uS7, found in Phocaeicola vulgatus (strain ATCC 8482 / DSM 1447 / JCM 5826 / CCUG 4940 / NBRC 14291 / NCTC 11154) (Bacteroides vulgatus).